The chain runs to 308 residues: uncharacterized protein (308 aa).

This is an uncharacterized protein from Ictalurid herpesvirus 1 (strain Auburn) (IcHV-1).